Consider the following 337-residue polypeptide: Eukaryotic translation initiation factor 3 subunit H (337 aa).

In terms of domain architecture, MPN spans 21–153 (VQCDGLAVMK…LKAYRLTPQA (133 aa)).

This sequence belongs to the eIF-3 subunit H family. As to quaternary structure, component of the eukaryotic translation initiation factor 3 (eIF-3) complex.

Its subcellular location is the cytoplasm. Component of the eukaryotic translation initiation factor 3 (eIF-3) complex, which is involved in protein synthesis of a specialized repertoire of mRNAs and, together with other initiation factors, stimulates binding of mRNA and methionyl-tRNAi to the 40S ribosome. The eIF-3 complex specifically targets and initiates translation of a subset of mRNAs involved in cell proliferation. This chain is Eukaryotic translation initiation factor 3 subunit H, found in Bombyx mori (Silk moth).